Consider the following 255-residue polypeptide: 5'-nucleotidase SurE (255 aa).

Residues aspartate 8, aspartate 9, serine 39, and asparagine 91 each coordinate a divalent metal cation.

The protein belongs to the SurE nucleotidase family. A divalent metal cation is required as a cofactor.

The protein localises to the cytoplasm. It carries out the reaction a ribonucleoside 5'-phosphate + H2O = a ribonucleoside + phosphate. Functionally, nucleotidase that shows phosphatase activity on nucleoside 5'-monophosphates. This chain is 5'-nucleotidase SurE, found in Acinetobacter baylyi (strain ATCC 33305 / BD413 / ADP1).